Reading from the N-terminus, the 821-residue chain is Calpain-3 (821 aa).

A disordered region spans residues 7-37 (ASVAPRTAAEPRSPGPVPHPAQSKATEAGGG). Residues 74 to 417 (LYVDPEFPPD…FTKLEICNLT (344 aa)) form the Calpain catalytic domain. Catalysis depends on residues Cys129, His334, and Asn358. A domain III region spans residues 418 to 586 (ADALQSDKLQ…KRNLSEEVEN (169 aa)). Residues 587–649 (TISVDRPVKK…QPGSSDQESE (63 aa)) form a linker region. Positions 609–652 (ANSNKELGVDQESEEGKGKTSPDKQKQSPQPQPGSSDQESEEQQ) are disordered. The span at 622 to 634 (EEGKGKTSPDKQK) shows a compositional bias: basic and acidic residues. Low complexity predominate over residues 635–645 (QSPQPQPGSSD). EF-hand domains lie at 649 to 683 (EEQQ…VVNK), 692 to 725 (FTLE…NKIK), 722 to 757 (NKIK…AGFH), and 787 to 821 (VRLE…TMYA). A domain IV region spans residues 650–821 (EQQQFRNIFK…LEWLQLTMYA (172 aa)). Ca(2+) is bound by residues Ala662, Asp665, Glu667, Glu672, Asp705, Asp707, Ser709, Lys711, Glu716, Asp735, Asp737, Ser739, Thr741, Glu746, Asp800, Asp802, Asp804, and Ile806.

It belongs to the peptidase C2 family. Homodimer; via EF-hand domain 4. Interacts with TTN/titin. Interacts with CMYA5; this interaction, which results in CMYA5 proteolysis, may protect CAPN3 from autolysis. Interacts with SIMC1. Interacts with UTP25; the interaction is required for CAPN3 translocation to the nucleolus. As to expression, isoform I is skeletal muscle specific.

It is found in the cytoplasm. The protein localises to the nucleus. It localises to the nucleolus. It carries out the reaction Broad endopeptidase activity.. Activated by micromolar concentrations of calcium and inhibited by calpastatin. Functionally, calcium-regulated non-lysosomal thiol-protease. Proteolytically cleaves CTBP1 at 'His-409'. Mediates, with UTP25, the proteasome-independent degradation of p53/TP53. This chain is Calpain-3, found in Homo sapiens (Human).